The following is a 513-amino-acid chain: Maturase K (513 aa).

Belongs to the intron maturase 2 family. MatK subfamily.

It is found in the plastid. The protein localises to the chloroplast. Usually encoded in the trnK tRNA gene intron. Probably assists in splicing its own and other chloroplast group II introns. This chain is Maturase K, found in Phragmites australis (Common reed).